A 441-amino-acid chain; its full sequence is Aminopeptidase C (441 aa).

Residues cysteine 70, histidine 361, and asparagine 382 contribute to the active site.

Belongs to the peptidase C1 family.

The enzyme catalyses Inactivates bleomycin B2 (a cytotoxic glycometallopeptide) by hydrolysis of a carboxyamide bond of beta-aminoalanine, but also shows general aminopeptidase activity. The specificity varies somewhat with source, but amino acid arylamides of Met, Leu and Ala are preferred.. This chain is Aminopeptidase C (pepC), found in Listeria innocua serovar 6a (strain ATCC BAA-680 / CLIP 11262).